Reading from the N-terminus, the 251-residue chain is Flagellar L-ring protein (251 aa).

A signal peptide spans 1 to 17 (MIRKLAALIVAAAALQA). Residue Cys-18 is the site of N-palmitoyl cysteine attachment. The S-diacylglycerol cysteine moiety is linked to residue Cys-18.

Belongs to the FlgH family. As to quaternary structure, the basal body constitutes a major portion of the flagellar organelle and consists of four rings (L,P,S, and M) mounted on a central rod.

The protein resides in the cell outer membrane. The protein localises to the bacterial flagellum basal body. Functionally, assembles around the rod to form the L-ring and probably protects the motor/basal body from shearing forces during rotation. The polypeptide is Flagellar L-ring protein (Maricaulis maris (strain MCS10) (Caulobacter maris)).